The primary structure comprises 679 residues: MEKHFKRTLITTALPYANGPVHIGHLAGVYVPADIYARYLRLKGEEVLMIGGSDEHGVPITLRAKKEGITPQDVVDRYHGIIKKSFEEFGITFDIYSRTTSATHHQMASDFFRTLYDKGEFIEKTSEQYYDEEAKQFLADRYIMGTCPHCGNEKAYGDQCEACGTSLSPTDLIDPKSAISGSKPVMRETKHWYLPLDKWEPFLRKWILEDHKEWKPNVYGQCKSWLDMGLQPRAVSRDLDWGIPVPVEGAEGKVLYVWFDAPIGYISNTKELLPDSWETWWKDPETKMVHFIGKDNIVFHCIVFPSMLKAEGSYNLPENVPANEFLNLEGDKISTSRNWAVWLNEYLVDMPGKQDVLRYVLTANAPETKDNDFTWKDFQARNNNELVAILGNFVNRALVLTDKYFEGKVPVAGELTDYDRQTLKDFADVKENVERLLDTYHFRDAQKEAMNLARIGNKYLADMEPWKLAKTDMPRVATIMNIALQITANLAIAFEPFLPFSMEKLNKMLNVEPLGWNRLGATDLLEAGHQLGKAELLFEKIEDSVIEAQVQKLLDTKKANEEANYKAKPIRENIEFDDFMKLDIRVGTVLECVKVPKADKLLQFRIDDGLEKRTIVSGIAQHYKPEELVGKQVCFIANLAPRKLKGIVSEGMILSAENFDGKLAVITPEKEVKPGSEVK.

Residues 15–25 (PYANGPVHIGH) carry the 'HIGH' region motif. C147, C150, C160, and C163 together coordinate Zn(2+). A 'KMSKS' region motif is present at residues 332 to 336 (KISTS). T335 contacts ATP. The 102-residue stretch at 578–679 (DFMKLDIRVG…KEVKPGSEVK (102 aa)) folds into the tRNA-binding domain.

Belongs to the class-I aminoacyl-tRNA synthetase family. MetG type 1 subfamily. Homodimer. Zn(2+) is required as a cofactor.

The protein resides in the cytoplasm. It catalyses the reaction tRNA(Met) + L-methionine + ATP = L-methionyl-tRNA(Met) + AMP + diphosphate. Its function is as follows. Is required not only for elongation of protein synthesis but also for the initiation of all mRNA translation through initiator tRNA(fMet) aminoacylation. This Parabacteroides distasonis (strain ATCC 8503 / DSM 20701 / CIP 104284 / JCM 5825 / NCTC 11152) protein is Methionine--tRNA ligase.